We begin with the raw amino-acid sequence, 362 residues long: Histidinol-phosphate aminotransferase (362 aa).

The residue at position 222 (K222) is an N6-(pyridoxal phosphate)lysine.

This sequence belongs to the class-II pyridoxal-phosphate-dependent aminotransferase family. Histidinol-phosphate aminotransferase subfamily. As to quaternary structure, homodimer. Pyridoxal 5'-phosphate is required as a cofactor.

The catalysed reaction is L-histidinol phosphate + 2-oxoglutarate = 3-(imidazol-4-yl)-2-oxopropyl phosphate + L-glutamate. It functions in the pathway amino-acid biosynthesis; L-histidine biosynthesis; L-histidine from 5-phospho-alpha-D-ribose 1-diphosphate: step 7/9. This Shewanella amazonensis (strain ATCC BAA-1098 / SB2B) protein is Histidinol-phosphate aminotransferase.